We begin with the raw amino-acid sequence, 386 residues long: Nucleosome assembly protein 1-like 4 (386 aa).

Residues 1–29 (MADNSFSDGVPSDSLEAAKNASNTEKLTD) are disordered. Residue alanine 2 is modified to N-acetylalanine. Serine 5, serine 7, and serine 12 each carry phosphoserine. The span at 20–29 (NASNTEKLTD) shows a compositional bias: polar residues. Phosphoserine is present on serine 49. Threonine 51 is modified (phosphothreonine). Phosphoserine occurs at positions 53 and 54. Threonine 58 carries the phosphothreonine modification. The residue at position 105 (lysine 105) is an N6-acetyllysine. Serine 125 bears the Phosphoserine mark. Lysine 146 carries the post-translational modification N6-acetyllysine. A Nuclear localization signal motif is present at residues 265-271 (IKKKQKH). Residue serine 304 is modified to Phosphoserine. A compositionally biased stretch (acidic residues) spans 339 to 370 (AIEDDDNFEEGEEGEEEELEGDEEAEDDDDAE). Residues 339–386 (AIEDDDNFEEGEEGEEEELEGDEEAEDDDDAEINPKKEPSQPSECKQQ) form a disordered region.

The protein belongs to the nucleosome assembly protein (NAP) family. Interacts with core (H2A, H2B, H3, H4) and linker (H1) histones. In terms of processing, polyglutamylated and polyglycylated. These 2 modifications occur exclusively on glutamate residues and result in either polyglutamate or polyglycine chains on the gamma-carboxyl group. Both modifications can coexist on the same protein on adjacent residues, and lowering polyglycylation levels increases polyglutamylation, and reciprocally. Polyglutamylated by TTLL4. Phosphorylated at the G0/G1 boundary but it is not phosphorylated in S-phase. Phosphorylated protein remains in the cytoplasm in a complex with histones during the G0/G1 transition, whereas dephosphorylation triggers its transport into the nucleus at the G1/S-boundary.

The protein localises to the nucleus. It localises to the cytoplasm. Its function is as follows. Acts as a histone chaperone in nucleosome assembly. In Bos taurus (Bovine), this protein is Nucleosome assembly protein 1-like 4 (NAP1L4).